A 518-amino-acid chain; its full sequence is Tropomyosin-1, isoforms 33/34 (518 aa).

A coiled-coil region spans residues 14-267 (DKDGALERAL…DDLIVEKERY (254 aa)). 2 disordered regions span residues 101-125 (RSEE…ESER) and 288-518 (FWNP…APPA). The span at 293 to 305 (NPKPPTPKLPTPT) shows a compositional bias: pro residues. Residues 318–348 (AAEAAAAAEAEAAEAAAAAGEAGPDGAPAAP) show a composition bias toward low complexity. 2 stretches are compositionally biased toward pro residues: residues 357–374 (EPTP…PPPF) and 394–405 (EPPPPGSEPEPV). Over residues 406–518 (PAAEGEAAPA…AAAEGEAPPA (113 aa)) the composition is skewed to low complexity.

The protein belongs to the tropomyosin family. As to quaternary structure, homodimer. In terms of tissue distribution, both isoforms are only expressed in indirect flight muscles.

Its subcellular location is the cytoplasm. It is found in the cytoskeleton. Functionally, tropomyosin, in association with the troponin complex, plays a central role in the calcium dependent regulation of muscle contraction. The polypeptide is Tropomyosin-1, isoforms 33/34 (Tm1) (Drosophila melanogaster (Fruit fly)).